Here is a 346-residue protein sequence, read N- to C-terminus: Blue-light-activated histidine kinase 2 (346 aa).

The region spanning 8–82 (HDKEAWGRLP…KAIRNCEEVE (75 aa)) is the PAS domain. Position 55 is an S-4a-FMN cysteine (cysteine 55). One can recognise a PAC domain in the interval 79–133 (EEVEETIYNYRADGEGFWNHLLMGPLEDQDEKCRYFVGIQVDMGQSESPDRATEL). The 196-residue stretch at 139-334 (EVQHRVKNHL…IVNIDIPLSQ (196 aa)) folds into the Histidine kinase domain. Histidine 142 is modified (phosphohistidine; by autocatalysis).

In terms of processing, FMN binds covalently to cysteine after exposure to blue light and this bond is spontaneously broken in the dark.

The catalysed reaction is ATP + protein L-histidine = ADP + protein N-phospho-L-histidine.. Its function is as follows. Photosensitive kinase that is involved in increased bacterial virulence upon exposure to light. This is Blue-light-activated histidine kinase 2 from Erythrobacter litoralis (strain HTCC2594).